A 295-amino-acid polypeptide reads, in one-letter code: tRNA-cytidine(32) 2-sulfurtransferase (295 aa).

Residues 63-68 (SGGKDS) carry the PP-loop motif motif. Cys138, Cys141, and Cys229 together coordinate [4Fe-4S] cluster.

This sequence belongs to the TtcA family. As to quaternary structure, homodimer. It depends on Mg(2+) as a cofactor. Requires [4Fe-4S] cluster as cofactor.

The protein resides in the cytoplasm. The catalysed reaction is cytidine(32) in tRNA + S-sulfanyl-L-cysteinyl-[cysteine desulfurase] + AH2 + ATP = 2-thiocytidine(32) in tRNA + L-cysteinyl-[cysteine desulfurase] + A + AMP + diphosphate + H(+). Its pathway is tRNA modification. In terms of biological role, catalyzes the ATP-dependent 2-thiolation of cytidine in position 32 of tRNA, to form 2-thiocytidine (s(2)C32). The sulfur atoms are provided by the cysteine/cysteine desulfurase (IscS) system. This Hyphomonas neptunium (strain ATCC 15444) protein is tRNA-cytidine(32) 2-sulfurtransferase.